The sequence spans 340 residues: N-acetyl-gamma-glutamyl-phosphate reductase (340 aa).

Cys-146 is an active-site residue.

It belongs to the NAGSA dehydrogenase family. Type 1 subfamily.

It localises to the cytoplasm. The enzyme catalyses N-acetyl-L-glutamate 5-semialdehyde + phosphate + NADP(+) = N-acetyl-L-glutamyl 5-phosphate + NADPH + H(+). The protein operates within amino-acid biosynthesis; L-arginine biosynthesis; N(2)-acetyl-L-ornithine from L-glutamate: step 3/4. Functionally, catalyzes the NADPH-dependent reduction of N-acetyl-5-glutamyl phosphate to yield N-acetyl-L-glutamate 5-semialdehyde. The protein is N-acetyl-gamma-glutamyl-phosphate reductase of Streptococcus mutans serotype c (strain ATCC 700610 / UA159).